Consider the following 497-residue polypeptide: MINHEINKLLAFSLKKGLIQEDDKIYSSNMLAGLFNLDNFYFEEISDVPSTATAILNQLLAYAVKENLINDTVAERDLFDTKIMNCVMPRPSEVINNFNRLLNNSPKEATSYYYKLSIASNYIRKDRIDKNITWKTPTEYGDLDITINLSKPEKDPRDIAKAKLSKSTSYPKCLLCKENEGFYGNINHPARQTLRIIPLELNKSKWFLQYSPYTYYNEHCIILNNEHIPMKISRITFENLLSFIDILPHYFAGSNADLPIVGGSILSHDHYQGGRYTFAMEKAPVEKEYSIKGYEDISVGRVKWPMSVIRISSKNKTKLINLAEHILTSWRNYSDKTQSILSHTGSEPHNTITPIARKRNEEYELDLVLRNNRTDENYPLGIFHPHNEVHHIKKENIGLIEVMGLAVLPARLKSELALIKENLIEKKKDISNDSTISKHNTWYKYILDNYKNISEENIDCILKKEVGIKFLEVLKHAGVFKRNSSGLSAFDKFINIL.

Belongs to the galactose-1-phosphate uridylyltransferase type 2 family.

It is found in the cytoplasm. The catalysed reaction is alpha-D-galactose 1-phosphate + UDP-alpha-D-glucose = alpha-D-glucose 1-phosphate + UDP-alpha-D-galactose. It functions in the pathway carbohydrate metabolism; galactose metabolism. This Clostridium acetobutylicum (strain ATCC 824 / DSM 792 / JCM 1419 / IAM 19013 / LMG 5710 / NBRC 13948 / NRRL B-527 / VKM B-1787 / 2291 / W) protein is Galactose-1-phosphate uridylyltransferase.